Here is a 554-residue protein sequence, read N- to C-terminus: Arginine--tRNA ligase (554 aa).

The 'HIGH' region motif lies at 129–139; sequence ANPTGPLHIGH.

It belongs to the class-I aminoacyl-tRNA synthetase family. As to quaternary structure, monomer.

The protein localises to the cytoplasm. The catalysed reaction is tRNA(Arg) + L-arginine + ATP = L-arginyl-tRNA(Arg) + AMP + diphosphate. This chain is Arginine--tRNA ligase, found in Citrifermentans bemidjiense (strain ATCC BAA-1014 / DSM 16622 / JCM 12645 / Bem) (Geobacter bemidjiensis).